Consider the following 204-residue polypeptide: Elongation factor Ts (204 aa).

The interval 87 to 90 is involved in Mg(2+) ion dislocation from EF-Tu; sequence TDFV.

This sequence belongs to the EF-Ts family.

It is found in the cytoplasm. Functionally, associates with the EF-Tu.GDP complex and induces the exchange of GDP to GTP. It remains bound to the aminoacyl-tRNA.EF-Tu.GTP complex up to the GTP hydrolysis stage on the ribosome. In Frankia casuarinae (strain DSM 45818 / CECT 9043 / HFP020203 / CcI3), this protein is Elongation factor Ts.